A 352-amino-acid polypeptide reads, in one-letter code: C-C chemokine receptor type 5 (352 aa).

The Extracellular portion of the chain corresponds to 1 to 30; it reads MDYQVSSPTYDIDYYTSEPCQKVNVKQIAA. Tyr3 carries the sulfotyrosine modification. Ser6 and Ser7 each carry an O-linked (GalNAc...) serine glycan. A sulfotyrosine mark is found at Tyr10, Tyr14, and Tyr15. Cystine bridges form between Cys20–Cys269 and Cys101–Cys178. The helical transmembrane segment at 31–58 threads the bilayer; the sequence is RLLPPLYSLVFIFGFVGNILVVLILINC. The Cytoplasmic portion of the chain corresponds to 59–68; the sequence is KRLKSMTDIY. Residues 69–89 traverse the membrane as a helical segment; it reads LLNLAISDLFFLLTVPFWAHY. Over 90 to 102 the chain is Extracellular; it reads AAARWDFGNTMCQ. Residues 103–124 form a helical membrane-spanning segment; that stretch reads LLTGLYFIGFFSGIFFIILLTI. The Cytoplasmic portion of the chain corresponds to 125–141; the sequence is DRYLAIVHAVFALKART. A helical transmembrane segment spans residues 142-166; the sequence is VTFGVVTSVITWVVAVFASLPGIIF. Residues 167-198 are Extracellular-facing; that stretch reads TRSQREGLHYTCSSHFPYSQYQFWKNFQTLKI. A helical transmembrane segment spans residues 199 to 218; that stretch reads VILGLVLPLLVMVICYSGIL. Topologically, residues 219–235 are cytoplasmic; the sequence is KTLLRCRNEKKRHRAVR. Residues 236 to 260 traverse the membrane as a helical segment; the sequence is LIFTIMIVYFLFWAPYNIVLLLNTF. Topologically, residues 261–277 are extracellular; the sequence is QEFFGLNNCSSSNRLDQ. A helical membrane pass occupies residues 278-301; sequence AMQVTETLGMTHCCINPIIYAFVG. Residues 302-352 lie on the Cytoplasmic side of the membrane; sequence EKFRNYLLVFFQKHIAKRFCKCCSIFQQEAPERASSVYTRSTGEQEISVGL. Residues Cys321, Cys323, and Cys324 are each lipidated (S-palmitoyl cysteine). A phosphoserine; by BARK1 mark is found at Ser336, Ser337, Ser342, and Ser349.

It belongs to the G-protein coupled receptor 1 family. As to quaternary structure, interacts with PRAF2. Efficient ligand binding to CCL3/MIP-1alpha and CCL4/MIP-1beta requires sulfation, O-glycosylation and sialic acid modifications. Glycosylation on Ser-6 is required for efficient binding of CCL4. Interacts with GRK2. Interacts with ARRB1 and ARRB2. Interacts with CNIH4. Interacts with S100A4; this interaction stimulates T-lymphocyte chemotaxis. Sulfated on at least 2 of the N-terminal tyrosines. Sulfation is required for efficient binding of the chemokines, CCL3 and CCL4. In terms of processing, palmitoylation in the C-terminal is important for cell surface expression. Post-translationally, phosphorylation on serine residues in the C-terminal is stimulated by binding CC chemokines especially by APO-RANTES. O-glycosylated, but not N-glycosylated. Ser-6 appears to be the major site even if Ser-7 may be also O-glycosylated. Also sialylated glycans present which contribute to chemokine binding. Thr-16 and Ser-17 may also be glycosylated and, if so, with small moieties such as a T-antigen.

The protein resides in the cell membrane. In terms of biological role, receptor for a number of inflammatory CC-chemokines including CCL3/MIP-1-alpha, CCL4/MIP-1-beta and RANTES and subsequently transduces a signal by increasing the intracellular calcium ion level. May play a role in the control of granulocytic lineage proliferation or differentiation. Participates in T-lymphocyte migration to the infection site by acting as a chemotactic receptor. This Nasalis larvatus (Proboscis monkey) protein is C-C chemokine receptor type 5 (CCR5).